A 255-amino-acid polypeptide reads, in one-letter code: 2,3-dehydroadipyl-CoA hydratase (255 aa).

This sequence belongs to the enoyl-CoA hydratase/isomerase family.

It catalyses the reaction a (3S)-3-hydroxyacyl-CoA = a (2E)-enoyl-CoA + H2O. The catalysed reaction is a 4-saturated-(3S)-3-hydroxyacyl-CoA = a (3E)-enoyl-CoA + H2O. The protein operates within aromatic compound metabolism; phenylacetate degradation. Functionally, catalyzes the reversible conversion of enzymatically produced 2,3-dehydroadipyl-CoA into 3-hydroxyadipyl-CoA. The protein is 2,3-dehydroadipyl-CoA hydratase (paaF) of Escherichia coli (strain K12).